The primary structure comprises 202 residues: Small ribosomal subunit protein uS4c (202 aa).

Residues 90-152 (MRLDNLIFRL…AASKSLVNTY (63 aa)) form the S4 RNA-binding domain.

The protein belongs to the universal ribosomal protein uS4 family. As to quaternary structure, part of the 30S ribosomal subunit. Contacts protein S5. The interaction surface between S4 and S5 is involved in control of translational fidelity.

The protein localises to the plastid. It localises to the chloroplast. In terms of biological role, one of the primary rRNA binding proteins, it binds directly to 16S rRNA where it nucleates assembly of the body of the 30S subunit. Its function is as follows. With S5 and S12 plays an important role in translational accuracy. This is Small ribosomal subunit protein uS4c (rps4) from Emiliania huxleyi (Coccolithophore).